A 262-amino-acid polypeptide reads, in one-letter code: Protein BcsX (262 aa).

It functions in the pathway glycan metabolism; bacterial cellulose biosynthesis. The protein is Protein BcsX (bcsX) of Komagataeibacter xylinus (Gluconacetobacter xylinus).